Consider the following 315-residue polypeptide: Methionyl-tRNA formyltransferase (315 aa).

A (6S)-5,6,7,8-tetrahydrofolate-binding site is contributed by 113 to 116 (SLLP).

Belongs to the Fmt family.

It carries out the reaction L-methionyl-tRNA(fMet) + (6R)-10-formyltetrahydrofolate = N-formyl-L-methionyl-tRNA(fMet) + (6S)-5,6,7,8-tetrahydrofolate + H(+). Its function is as follows. Attaches a formyl group to the free amino group of methionyl-tRNA(fMet). The formyl group appears to play a dual role in the initiator identity of N-formylmethionyl-tRNA by promoting its recognition by IF2 and preventing the misappropriation of this tRNA by the elongation apparatus. This is Methionyl-tRNA formyltransferase from Photorhabdus laumondii subsp. laumondii (strain DSM 15139 / CIP 105565 / TT01) (Photorhabdus luminescens subsp. laumondii).